The primary structure comprises 390 residues: Phosphoglycerate kinase (390 aa).

Residues 21 to 23, Arg-36, 59 to 62, Arg-114, and Arg-147 contribute to the substrate site; these read DLN and HLGR. Residues Lys-198, Glu-314, and 340 to 343 contribute to the ATP site; that span reads GGDT.

The protein belongs to the phosphoglycerate kinase family. Monomer.

It is found in the cytoplasm. The enzyme catalyses (2R)-3-phosphoglycerate + ATP = (2R)-3-phospho-glyceroyl phosphate + ADP. It functions in the pathway carbohydrate degradation; glycolysis; pyruvate from D-glyceraldehyde 3-phosphate: step 2/5. This chain is Phosphoglycerate kinase (pgk), found in Buchnera aphidicola subsp. Acyrthosiphon pisum (strain APS) (Acyrthosiphon pisum symbiotic bacterium).